Reading from the N-terminus, the 958-residue chain is MLMISNCSRDLLQRHFSNYHDPSASEAPVAGAGPSVAGKTPIACLNCSQAKTGCNKEVPCQRCQDKGLHCVQRYARRTSKLAARSQAAATAAAAQASRVAQVTPVTVQQSLPNVSVSIEPSQTLSQIQPPLVHEGGASVTMDPAILEMPLMNSFMKQQDPEVHDGSSPANSITFPLPIHLKAESPRQRTASVDLNFNNMNSEPSPPSIEPMEDQSWVNSLMSNDPNFGPGNMFSSTYDLGYQLGPSYADPTTDFSQMSQSMLQHDASMSSMEFAGSPSGVSPFGDLSTSNSEPSSSSWGSSHTRATSICSAHCLYDQSGEFDVTSNSAKQGLPISTDSDVILTEAAWPMARCTPPIYSGACPRTALGHLQRLEQKSSYQGARPFAWHTLERELSSLNWDNADLASVVPMNSQTRDSLMSISQRFHARALDIHRENDPGRDKSPLGSNCGPMSFLNLPSSKVLEFFMKSYVRSLTSFYSLVSEGRIDPNQMHRNDPASIILMLLMIAQGASAVDSEDARILSMGLIETCRISLLDIIDKNVEMSADPTALRAALLFAHLGAWSGDKWLMDIAMGQRGMYISMLKHAGMLTAQPPICPVLDGDQGQKNSWRLWLQVETKNRLVYDWVMVDQELSLFHDTDPQLDVSELRASLPCSEKLWKSSTVEQWADAVQCYLSKGNPHPLTPPSLYHLYREFLEQKLVDGRVGLTAHQLRLLLHPIQKMLCQQRQTLTCFSDMFVPDQPGHVSFSKAYVMRQVEVVRSLLSRWHDLAMRCLNMNPDCTIMRTNMVLYHLISLNAVTNFPEIESFARQERYDGSYWGSRHQRCIYNRQQAVHDCGQVFSILRNLPTDRLPTWWSAAIYRATMILWADSALQSQSQAHASLSPPEATEGQYAMNAPQDFNHTLDYNVIPYVTRSDGTPFHLDRHSEVLDYAICAIDQGASSRLGEGIKRKLIALGNNWH.

The zn(2)-C6 fungal-type DNA-binding region spans 44–70; it reads CLNCSQAKTGCNKEVPCQRCQDKGLHC. Residues 272 to 301 form a disordered region; the sequence is EFAGSPSGVSPFGDLSTSNSEPSSSSWGSS. Over residues 287–301 the composition is skewed to low complexity; that stretch reads STSNSEPSSSSWGSS.

Its subcellular location is the nucleus. Transcription factor; part of the gene cluster that mediates the biosynthesis of dihydroxynaphthalene (DHN)-melanin, a bluish-green pigment forming a dark layer in the conidial wall that protects the conidia from UV radiations. The 2 transcription factors present in the cluster, PfmaF and PfmaH, coordinately regulate DHN-melanin production. PfmaH acts as a pathway specific regulator to mediate the expression of Pfma cluster genes including PfmaJ, leading to DHN-melanin production in conidia, and regulates the conidial formation. The sequence is that of Transcription factor PfmaH (PfmaH) from Pestalotiopsis fici (strain W106-1 / CGMCC3.15140).